The primary structure comprises 277 residues: S-formylglutathione hydrolase FrmB (277 aa).

Active-site charge relay system residues include Ser145, Asp221, and His254.

This sequence belongs to the esterase D family.

The enzyme catalyses S-formylglutathione + H2O = formate + glutathione + H(+). Functionally, serine hydrolase involved in the detoxification of formaldehyde. Hydrolyzes S-formylglutathione to glutathione and formate. The protein is S-formylglutathione hydrolase FrmB (frmB) of Escherichia coli (strain SMS-3-5 / SECEC).